A 160-amino-acid chain; its full sequence is Transcription antitermination protein NusB (160 aa).

This sequence belongs to the NusB family.

Functionally, involved in transcription antitermination. Required for transcription of ribosomal RNA (rRNA) genes. Binds specifically to the boxA antiterminator sequence of the ribosomal RNA (rrn) operons. This chain is Transcription antitermination protein NusB, found in Rhizobium johnstonii (strain DSM 114642 / LMG 32736 / 3841) (Rhizobium leguminosarum bv. viciae).